The primary structure comprises 192 residues: Molybdenum cofactor guanylyltransferase (192 aa).

GTP contacts are provided by residues 10–12 (LAG), K23, N51, D69, and D99. Residue D99 participates in Mg(2+) binding.

This sequence belongs to the MobA family. Monomer. Mg(2+) is required as a cofactor.

It localises to the cytoplasm. The catalysed reaction is Mo-molybdopterin + GTP + H(+) = Mo-molybdopterin guanine dinucleotide + diphosphate. Transfers a GMP moiety from GTP to Mo-molybdopterin (Mo-MPT) cofactor (Moco or molybdenum cofactor) to form Mo-molybdopterin guanine dinucleotide (Mo-MGD) cofactor. The protein is Molybdenum cofactor guanylyltransferase of Haemophilus influenzae (strain 86-028NP).